A 705-amino-acid chain; its full sequence is Effector protein AvrPphDPsv (705 aa).

Positions 1-15 (MNPLQSIQHNITTPP) are enriched in polar residues. 2 disordered regions span residues 1–40 (MNPLQSIQHNITTPPISGGQPLDAVGPQAQKSHPKRISPS) and 175–205 (RLETSLLSSPDHSRPPSQPKPVHLGSVRRES).

It is found in the secreted. Functionally, effector protein involved in non-host recognition. This chain is Effector protein AvrPphDPsv (avrPphDPsv), found in Pseudomonas savastanoi (Pseudomonas syringae pv. savastanoi).